A 689-amino-acid chain; its full sequence is Long-chain-fatty-acid--CoA ligase 2 (689 aa).

ATP is bound at residue 252 to 263 (YTSGSTGKPKGV). The FACS signature appears at 518 to 567 (DGWFKTGDVGEIAKGNTLRLIDRKKNIVKSLNGEYIALEKIEAQFFTSPL).

This sequence belongs to the ATP-dependent AMP-binding enzyme family. It depends on Mg(2+) as a cofactor.

The protein resides in the golgi apparatus. Its subcellular location is the vacuole membrane. It catalyses the reaction a long-chain fatty acid + ATP + CoA = a long-chain fatty acyl-CoA + AMP + diphosphate. In terms of biological role, esterification, concomitant with transport, of endogenous long-chain fatty acids into metabolically active CoA thioesters for subsequent degradation or incorporation into phospholipids. Plays an important role in the determination of viability in the stationary phase. This Schizosaccharomyces pombe (strain 972 / ATCC 24843) (Fission yeast) protein is Long-chain-fatty-acid--CoA ligase 2 (lcf2).